A 56-amino-acid polypeptide reads, in one-letter code: Large ribosomal subunit protein bL32 (56 aa).

The tract at residues 1-21 (MAVQQNRKTRSRRGMRRSHDA) is disordered. A compositionally biased stretch (basic residues) spans 7–16 (RKTRSRRGMR).

Belongs to the bacterial ribosomal protein bL32 family.

The polypeptide is Large ribosomal subunit protein bL32 (Vibrio cholerae serotype O1 (strain ATCC 39541 / Classical Ogawa 395 / O395)).